Here is a 461-residue protein sequence, read N- to C-terminus: Glycolipid 2-alpha-mannosyltransferase 2 (461 aa).

The Cytoplasmic segment spans residues 1–12; the sequence is MKPSIFYSSRQP. The helical; Signal-anchor for type II membrane protein transmembrane segment at 13 to 35 threads the bilayer; that stretch reads YLKYLAIILTTITIYVLTHSSYS. Polar residues predominate over residues 35–52; the sequence is SADPNINDVTTKPISETV. A disordered region spans residues 35-138; that stretch reads SADPNINDVT…SSSKDPVKPE (104 aa). Residues 36 to 461 lie on the Lumenal side of the membrane; it reads ADPNINDVTT…QKPKEWEKYQ (426 aa). Composition is skewed to low complexity over residues 61–70 and 106–116; these read SSPEQQQQQP and PKSSSSSPQQQ. A compositionally biased stretch (basic and acidic residues) spans 117–126; that stretch reads EKQDTKKESE. The Nucleophile role is filled by Glu349.

It belongs to the glycosyltransferase 15 family.

The protein localises to the golgi apparatus membrane. Functionally, involved in O-glycosylation of cell wall and secreted proteins. Transfers an alpha-D-mannosyl residue from GDP-mannose into lipid-linked oligosaccharide, forming an alpha-(1-&gt;2)-D-mannosyl-D-mannose linkage. Mainly responsible for the addition of the third mannose residue in an O-linked mannose pentamer. Can also substitute for MNT1 by adding the second mannose residue. Important for adherence to host surfaces and for virulence. This is Glycolipid 2-alpha-mannosyltransferase 2 (MNT2) from Candida albicans (strain SC5314 / ATCC MYA-2876) (Yeast).